The sequence spans 848 residues: Protein MEI2-like 2 (848 aa).

RRM domains lie at 197-270 (RTLF…FSIP) and 282-355 (GTLV…PSRP). Disordered stretches follow at residues 370–400 (IDQD…QYSS), 455–523 (NQPH…SQGQ), and 826–848 (ATGD…GEEL).

In terms of biological role, probable RNA-binding protein that may play a role in growth regulation. This Oryza sativa subsp. japonica (Rice) protein is Protein MEI2-like 2 (ML2).